The chain runs to 119 residues: Large ribosomal subunit protein bL20 (119 aa).

It belongs to the bacterial ribosomal protein bL20 family.

Functionally, binds directly to 23S ribosomal RNA and is necessary for the in vitro assembly process of the 50S ribosomal subunit. It is not involved in the protein synthesizing functions of that subunit. The chain is Large ribosomal subunit protein bL20 from Verminephrobacter eiseniae (strain EF01-2).